A 332-amino-acid chain; its full sequence is Glycerol-3-phosphate dehydrogenase [NAD(P)+] (332 aa).

Residues tryptophan 11, arginine 30, and lysine 108 each contribute to the NADPH site. The sn-glycerol 3-phosphate site is built by lysine 108, glycine 137, and serine 139. Residue alanine 141 participates in NADPH binding. Lysine 192, aspartate 245, serine 255, arginine 256, and asparagine 257 together coordinate sn-glycerol 3-phosphate. The active-site Proton acceptor is the lysine 192. NADPH is bound at residue arginine 256. 2 residues coordinate NADPH: valine 280 and glutamate 282.

The protein belongs to the NAD-dependent glycerol-3-phosphate dehydrogenase family.

Its subcellular location is the cytoplasm. It catalyses the reaction sn-glycerol 3-phosphate + NAD(+) = dihydroxyacetone phosphate + NADH + H(+). The catalysed reaction is sn-glycerol 3-phosphate + NADP(+) = dihydroxyacetone phosphate + NADPH + H(+). It participates in membrane lipid metabolism; glycerophospholipid metabolism. In terms of biological role, catalyzes the reduction of the glycolytic intermediate dihydroxyacetone phosphate (DHAP) to sn-glycerol 3-phosphate (G3P), the key precursor for phospholipid synthesis. The polypeptide is Glycerol-3-phosphate dehydrogenase [NAD(P)+] (Burkholderia mallei (strain ATCC 23344)).